A 241-amino-acid chain; its full sequence is Probable xyloglucan-specific endo-beta-1,4-glucanase A (241 aa).

Positions 1-15 (MKVLALSALLSLASA) are cleaved as a signal peptide. Asparagine 47 is a glycosylation site (N-linked (GlcNAc...) asparagine).

Belongs to the glycosyl hydrolase 12 (cellulase H) family.

It localises to the secreted. The enzyme catalyses xyloglucan + H2O = xyloglucan oligosaccharides.. Functionally, catalyzes endohydrolysis of 1,4-beta-D-glucosidic linkages in xyloglucan with retention of the beta-configuration of the glycosyl residues. Specific for xyloglucan and does not hydrolyze other cell wall components. The sequence is that of Probable xyloglucan-specific endo-beta-1,4-glucanase A (xgeA) from Aspergillus niger (strain ATCC MYA-4892 / CBS 513.88 / FGSC A1513).